Consider the following 516-residue polypeptide: Exodeoxyribonuclease 7 large subunit (516 aa).

The protein belongs to the XseA family. In terms of assembly, heterooligomer composed of large and small subunits.

It is found in the cytoplasm. The catalysed reaction is Exonucleolytic cleavage in either 5'- to 3'- or 3'- to 5'-direction to yield nucleoside 5'-phosphates.. Functionally, bidirectionally degrades single-stranded DNA into large acid-insoluble oligonucleotides, which are then degraded further into small acid-soluble oligonucleotides. This Chlamydia trachomatis serovar A (strain ATCC VR-571B / DSM 19440 / HAR-13) protein is Exodeoxyribonuclease 7 large subunit.